The following is a 404-amino-acid chain: Probable mannosyltransferase KTR3 (404 aa).

The Cytoplasmic portion of the chain corresponds to 1-27; the sequence is MSVHHKKKLMPKSALLIRKYQKGIRSS. A helical; Signal-anchor for type II membrane protein membrane pass occupies residues 28 to 44; it reads FIGLIIVLSFLFFMSGS. Residues 45 to 83 form a stem region region; the sequence is RSPEVPIAQGTSVSRVASKDYLMPFTDKSQGVIHPVDDG. The Lumenal portion of the chain corresponds to 45-404; that stretch reads RSPEVPIAQG…AGNYKLPPGI (360 aa). Residues 84–404 are catalytic; sequence KKEKGVMVTL…AGNYKLPPGI (321 aa). Glu-295 acts as the Nucleophile in catalysis.

It belongs to the glycosyltransferase 15 family. In terms of assembly, interacts with SVP26.

It localises to the membrane. Functionally, possible glycosyltransferase that transfers an alpha-D-mannosyl residue from GDP-mannose into lipid-linked oligosaccharide, forming an alpha-(1-&gt;2)-D-mannosyl-D-mannose linkage. This Saccharomyces cerevisiae (strain ATCC 204508 / S288c) (Baker's yeast) protein is Probable mannosyltransferase KTR3 (KTR3).